Here is a 371-residue protein sequence, read N- to C-terminus: tRNA-specific 2-thiouridylase MnmA (371 aa).

ATP-binding positions include 22 to 29 and M48; that span reads GLSGGVDS. Residues 108–110 form an interaction with target base in tRNA region; the sequence is NPD. The active-site Nucleophile is the C113. A disulfide bridge links C113 with C209. G137 contributes to the ATP binding site. The interaction with tRNA stretch occupies residues 159 to 161; the sequence is KDQ. C209 functions as the Cysteine persulfide intermediate in the catalytic mechanism.

This sequence belongs to the MnmA/TRMU family.

The protein localises to the cytoplasm. It carries out the reaction S-sulfanyl-L-cysteinyl-[protein] + uridine(34) in tRNA + AH2 + ATP = 2-thiouridine(34) in tRNA + L-cysteinyl-[protein] + A + AMP + diphosphate + H(+). In terms of biological role, catalyzes the 2-thiolation of uridine at the wobble position (U34) of tRNA, leading to the formation of s(2)U34. The protein is tRNA-specific 2-thiouridylase MnmA of Coxiella burnetii (strain CbuG_Q212) (Coxiella burnetii (strain Q212)).